The following is a 317-amino-acid chain: Ribosomal protein L11 methyltransferase (317 aa).

4 residues coordinate S-adenosyl-L-methionine: threonine 158, glycine 179, aspartate 201, and asparagine 244.

The protein belongs to the methyltransferase superfamily. PrmA family.

The protein localises to the cytoplasm. It catalyses the reaction L-lysyl-[protein] + 3 S-adenosyl-L-methionine = N(6),N(6),N(6)-trimethyl-L-lysyl-[protein] + 3 S-adenosyl-L-homocysteine + 3 H(+). Its function is as follows. Methylates ribosomal protein L11. The chain is Ribosomal protein L11 methyltransferase from Streptococcus pyogenes serotype M1.